The chain runs to 186 residues: ATP synthase subunit b 3 (186 aa).

The helical transmembrane segment at 5 to 25 (LLPALLTFSATPALAAKGPFF) threads the bilayer.

The protein belongs to the ATPase B chain family. F-type ATPases have 2 components, F(1) - the catalytic core - and F(0) - the membrane proton channel. F(1) has five subunits: alpha(3), beta(3), gamma(1), delta(1), epsilon(1). F(0) has three main subunits: a(1), b(2) and c(10-14). The alpha and beta chains form an alternating ring which encloses part of the gamma chain. F(1) is attached to F(0) by a central stalk formed by the gamma and epsilon chains, while a peripheral stalk is formed by the delta and b chains.

Its subcellular location is the cell inner membrane. F(1)F(0) ATP synthase produces ATP from ADP in the presence of a proton or sodium gradient. F-type ATPases consist of two structural domains, F(1) containing the extramembraneous catalytic core and F(0) containing the membrane proton channel, linked together by a central stalk and a peripheral stalk. During catalysis, ATP synthesis in the catalytic domain of F(1) is coupled via a rotary mechanism of the central stalk subunits to proton translocation. Functionally, component of the F(0) channel, it forms part of the peripheral stalk, linking F(1) to F(0). This chain is ATP synthase subunit b 3, found in Dinoroseobacter shibae (strain DSM 16493 / NCIMB 14021 / DFL 12).